Here is a 113-residue protein sequence, read N- to C-terminus: Ribonuclease P protein component (113 aa).

The protein belongs to the RnpA family. Consists of a catalytic RNA component (M1 or rnpB) and a protein subunit.

The enzyme catalyses Endonucleolytic cleavage of RNA, removing 5'-extranucleotides from tRNA precursor.. RNaseP catalyzes the removal of the 5'-leader sequence from pre-tRNA to produce the mature 5'-terminus. It can also cleave other RNA substrates such as 4.5S RNA. The protein component plays an auxiliary but essential role in vivo by binding to the 5'-leader sequence and broadening the substrate specificity of the ribozyme. The protein is Ribonuclease P protein component of Clavibacter michiganensis subsp. michiganensis (strain NCPPB 382).